A 209-amino-acid chain; its full sequence is Uracil phosphoribosyltransferase (209 aa).

Residues Arg79, Arg104, and 131–139 (DPMLATGGS) contribute to the 5-phospho-alpha-D-ribose 1-diphosphate site. Uracil contacts are provided by residues Ile194 and 199-201 (GDA). Asp200 contributes to the 5-phospho-alpha-D-ribose 1-diphosphate binding site.

This sequence belongs to the UPRTase family. The cofactor is Mg(2+).

The catalysed reaction is UMP + diphosphate = 5-phospho-alpha-D-ribose 1-diphosphate + uracil. The protein operates within pyrimidine metabolism; UMP biosynthesis via salvage pathway; UMP from uracil: step 1/1. Allosterically activated by GTP. Its function is as follows. Catalyzes the conversion of uracil and 5-phospho-alpha-D-ribose 1-diphosphate (PRPP) to UMP and diphosphate. The protein is Uracil phosphoribosyltransferase of Ligilactobacillus salivarius (strain UCC118) (Lactobacillus salivarius).